The sequence spans 841 residues: uncharacterized protein (841 aa).

Residues 1–31 (MKIERYFKAIARAFIITFLFSLILQDNGVLA) form the signal peptide.

The protein resides in the secreted. This is an uncharacterized protein from Schizosaccharomyces pombe (strain 972 / ATCC 24843) (Fission yeast).